We begin with the raw amino-acid sequence, 215 residues long: N-(5'-phosphoribosyl)anthranilate isomerase (215 aa).

The protein belongs to the TrpF family.

The catalysed reaction is N-(5-phospho-beta-D-ribosyl)anthranilate = 1-(2-carboxyphenylamino)-1-deoxy-D-ribulose 5-phosphate. It participates in amino-acid biosynthesis; L-tryptophan biosynthesis; L-tryptophan from chorismate: step 3/5. This chain is N-(5'-phosphoribosyl)anthranilate isomerase, found in Paracoccus denitrificans (strain Pd 1222).